Reading from the N-terminus, the 332-residue chain is Fructose-1,6-bisphosphatase class 1 (332 aa).

4 residues coordinate Mg(2+): E94, D116, L118, and D119. Substrate contacts are provided by residues 119-122, N211, Y239, 257-259, and K269; these read DGSS and YLY. E275 is a Mg(2+) binding site.

This sequence belongs to the FBPase class 1 family. In terms of assembly, homotetramer. Mg(2+) is required as a cofactor.

It is found in the cytoplasm. It catalyses the reaction beta-D-fructose 1,6-bisphosphate + H2O = beta-D-fructose 6-phosphate + phosphate. The protein operates within carbohydrate biosynthesis; Calvin cycle. This is Fructose-1,6-bisphosphatase class 1 from Synechococcus sp. (strain JA-2-3B'a(2-13)) (Cyanobacteria bacterium Yellowstone B-Prime).